We begin with the raw amino-acid sequence, 305 residues long: uncharacterized protein (305 aa).

Residues 255–305 are disordered; sequence RCHRAGLRSPPRTREPLWSLGPSGGEAAGEAPGGKGPPTPVLPHARRAGAA. The span at 276–288 shows a compositional bias: gly residues; that stretch reads PSGGEAAGEAPGG.

This is an uncharacterized protein from Streptomyces fradiae (Streptomyces roseoflavus).